The chain runs to 263 residues: UPF0739 protein C1orf74 homolog (263 aa).

The protein belongs to the UPF0739 family.

The polypeptide is UPF0739 protein C1orf74 homolog (Xenopus tropicalis (Western clawed frog)).